The sequence spans 364 residues: Coproporphyrin III ferrochelatase (364 aa).

The Fe-coproporphyrin III site is built by Arg-29 and Tyr-118. Residues His-169 and Glu-250 each coordinate Fe(2+).

Belongs to the ferrochelatase family.

It is found in the cytoplasm. The enzyme catalyses Fe-coproporphyrin III + 2 H(+) = coproporphyrin III + Fe(2+). The protein operates within porphyrin-containing compound metabolism; protoheme biosynthesis. Involved in coproporphyrin-dependent heme b biosynthesis. Catalyzes the insertion of ferrous iron into coproporphyrin III to form Fe-coproporphyrin III. The chain is Coproporphyrin III ferrochelatase from Streptococcus pneumoniae (strain Taiwan19F-14).